The primary structure comprises 472 residues: Bone morphogenetic protein 3 (472 aa).

An N-terminal signal peptide occupies residues 1–22 (MAGASRLLFLWLGCFCVSLAQG). Positions 23–362 (ERPKPPFPEL…EQTLKKARRK (340 aa)) are excised as a propeptide. Basic and acidic residues predominate over residues 27 to 37 (PPFPELRKAVP). A disordered region spans residues 27-53 (PPFPELRKAVPGDRTAGGGPDSELQPQ). N-linked (GlcNAc...) asparagine glycosylation is found at asparagine 117, asparagine 141, asparagine 175, and asparagine 220. The interval 320 to 350 (PYKTLQAQAPEKSKNKKKQRKGPHRKSQTLQ) is disordered. The segment covering 333–346 (KNKKKQRKGPHRKS) has biased composition (basic residues). 3 disulfides stabilise this stretch: cysteine 370–cysteine 437, cysteine 399–cysteine 469, and cysteine 403–cysteine 471. Residue asparagine 463 is glycosylated (N-linked (GlcNAc...) asparagine).

It belongs to the TGF-beta family. Homodimer; disulfide-linked. Interacts with type II receptor ACVR2B. Expressed in adult and fetal cartilage.

The protein resides in the secreted. Functionally, growth factor of the TGF-beta superfamily that plays an essential role in developmental process by inducing and patterning early skeletal formation and by negatively regulating bone density. Antagonizes the ability of certain osteogenic BMPs to induce osteoprogenitor differentiation and ossification. Initiates signaling cascades by associating with type II receptor ACVR2B to activate SMAD2-dependent and SMAD-independent signaling cascades including TAK1 and JNK pathways. The sequence is that of Bone morphogenetic protein 3 (BMP3) from Homo sapiens (Human).